A 141-amino-acid chain; its full sequence is Acetyltransferase YE1169 (141 aa).

The N-acetyltransferase domain maps to 1–141; the sequence is MEIRVFQQSD…GKRLIVDQEY (141 aa).

The protein belongs to the acetyltransferase family. YpeA subfamily.

The polypeptide is Acetyltransferase YE1169 (Yersinia enterocolitica serotype O:8 / biotype 1B (strain NCTC 13174 / 8081)).